A 429-amino-acid chain; its full sequence is Enolase (429 aa).

A (2R)-2-phosphoglycerate-binding site is contributed by Gln-163. Residue Glu-205 is the Proton donor of the active site. Positions 242, 285, and 312 each coordinate Mg(2+). The (2R)-2-phosphoglycerate site is built by Lys-337, Arg-366, Ser-367, and Lys-388. Lys-337 functions as the Proton acceptor in the catalytic mechanism.

The protein belongs to the enolase family. It depends on Mg(2+) as a cofactor.

It is found in the cytoplasm. It localises to the secreted. Its subcellular location is the cell surface. The enzyme catalyses (2R)-2-phosphoglycerate = phosphoenolpyruvate + H2O. Its pathway is carbohydrate degradation; glycolysis; pyruvate from D-glyceraldehyde 3-phosphate: step 4/5. Its function is as follows. Catalyzes the reversible conversion of 2-phosphoglycerate (2-PG) into phosphoenolpyruvate (PEP). It is essential for the degradation of carbohydrates via glycolysis. This is Enolase from Methylorubrum extorquens (strain PA1) (Methylobacterium extorquens).